A 217-amino-acid polypeptide reads, in one-letter code: Replication-associated protein A (217 aa).

Residues 1-17 (MRAPASSAASNRPGPSN) show a composition bias toward low complexity. The tract at residues 1-22 (MRAPASSAASNRPGPSNHPTPR) is disordered. Residues 22–125 (RWNSKQFFLT…NGDSDEMGEL (104 aa)) form the CRESS-DNA virus Rep endonuclease domain. The short motif at 29–32 (FLTY) is the RCR-1 element. A divalent metal cation is bound by residues Glu63, His71, and His73. Positions 71–73 (HLH) match the RCR-2 motif. Catalysis depends on Tyr111, which acts as the For DNA cleavage activity. The RCR-3 signature appears at 111–114 (YISK). Residues 176–188 (SAAALFTEPPPVY) are oligomerization.

Belongs to the geminiviridae Rep protein family. In terms of assembly, homooligomer. Part of the C- and V-complexes which are RepA-Rep-DNA complexes involved in the c-sense and v-sense transcription.

It is found in the host nucleus. The protein localises to the host cytoplasm. Its function is as follows. Implicated in enhancement of V-sense gene expression. Acts a an inhibitor of C-sense gene transcription. In Miscanthus sacchariflorus (MiSV), this protein is Replication-associated protein A.